Consider the following 2072-residue polypeptide: MGNKLSCSCAPLMRKAYRYEDSPWQSSRRRDGHLLSSFRLWAEVFHVSASGAGTVKWQQVSEDLVPVNITCIQDSPECIFHITAYNSQVDKILDVRLVQPGTRIGQASECFVYWKDPMTNDTWGLNFTSPIDAKQFRECCSPSFKFSRKASSSYSLKLDPPGKGKVKAKRKPLSTPASPSRVRQEPQCTCMSAEQYARLRTDPRVRGSSTLPRNVGSHRITDVDGQQQVGSGKVVSAVSSTSLYDNVASGGPGTNQGADTLPRQMKGGQQDRQDVANSGVNTNTPGVIVTGVGNVGSDMCGQNHVGSQVGNDDPAACQMDMDLSKSEGTQAGGGLHQSVGTCTSSSKGTGTRNKDFGDDMTRDAHSHDMHQHNVINNNTRRKTKSTEDMNVDTSTLKRMLKPMPSTESPVTSPEMGRRRYNYYNANAAQTLGHPPHMHQHGMAMGMGGGGGGGHHIMNNNTMGRASSQSSRFSGSRSSHEIGRGYPPRNLYLELERERSCIEGSPPSDNVMFDNQCYATTPSSSNGNSDQDQSYGQQQSSGQHPQQQQGPPQRSSRHQHHHQQAPNVTPTPGSPTSRLLLEYEMHLRNTLAKGMDAESYSLHTFEALLSQSMENLANAKSSTLPLPPHRPLSTIRDKERDRDRDGYYSDRNELIRERERERDRGYLSDHNSSFSNSRCASCIGESARAQWFRHSDGWRSGSSTIGSGSGHGMMTQQIPGSGHKRSPWDSLPSLRQDSSLNDSGYKSARADSLEQRAEFIRQDSLRSEYLSDRESRYGIVQQASIESTDSRMCYLTSSEISDDDRMSLTTAVSDEDDGESVMASPYKAKATGTAASSFNCTGAVRKAGFLSVKKWLLRKKHQIELARKRGWKGYWVCLKGTTLLFYPCDSREGRSVEAAPKHLIIVDGAIMQPIPEHPKRDYIFCLSTAFGDAYLFQAPCQVELENWVNSIHSACAAAFARHRGKTGTLHLLQEEIFRLEKAIESDHKLKHMAELQQSVVTDQETRHQIQTQILQWEENLERLHCEQFRLRCYMASLQSGELPNPKSLLTHVSRPTKNTLNKLGVFTVSSFHAFICARSPSLLNNLLAGRGATKRRPPMLSRSNSGSSRRSMQMNSRDEPEKTFKVAMPDNAYSTVYLRDAMSVEEFLASACARRNLNPMEHFVRVKKRRDMEDHNYFVPHRNDLIENYLHNHEFVEVCMKILYQVELQRTTLEQMWGFSVEAELIENAERQDELCCYVSRVEDKSVAMHNGIIKGDEIMVINGAIVSDLDMMYLESVLQEEQSLSMMMRSSRTEPPDLVGIMRVTDDMIDSLVCPPPPTDPPVMSEEMITGLIVPAPGWNGTSKDLYSPEAESSPATSFVDPAAMAAQLAVGGVGGVVVGGLGVAKPTSRTSSFEIENLLKTAEQETRKSSPTGSVTSSVSTTALTPSRQLTDAEKLRKVVMELVDTERTYVKHLNNLLEHYLEPMKRETFLSNAEINALFGNIHEIVTFQRQFLQNLEESLDLEPDFNKFEHCGQFRNVLFAIGSAFLYYVNHFKLYSSFCASHSKAQKVLHPNEGNHALQEFLAARNPKQQHSSTLESYLIKPIQRILKYPLLLQQMRNLTDTRADEHVHLCEALKGMEKVAEHINEMQRIHEEYGAIFDHLFRQHQKSCKQPIDLSPGDLLYYGGVEWLNISDFLGKIKKGLELHAMCFVFKSAVVFLCKERLRQKKKLMGVSSKNATNEVEIIRYQVLIPVTEVQVRASSAKDMDSHFLWELIHLRSQLQRRSEKVYVLSNSTADFRNAFLKTIRQIIRESVRNMSIPMKNFGGSSGSVSGHSSQGMGSMGYPGNSQTLERPKQQITIVHGSHTLGKPKKKSGSQRHSAGNIDYDNLSGSQEADDLPPSVGVVHYASGHTHGQQMQPAGFRGRSKTVGDVTEITCSSPEPHQQQQQQQQQQQQLMQQGHAHAHPHPHPHPREPPPPPIRQPHLHHHSSDIERIDPGTKSEGEEDSQQGTIRPKATLGRTPNHLTLSTTSTLSVGSTGSQARLIQSSHPPASYQPVLMKDLGSPVWKPRDMINLGTDPQSTTRKDDVKN.

Glycine 2 carries N-myristoyl glycine lipidation. In terms of domain architecture, WH1 spans 29-147; the sequence is RRDGHLLSSF…ECCSPSFKFS (119 aa). Disordered stretches follow at residues 153-188, 245-284, 327-355, 459-486, 502-576, 618-655, and 699-747; these read SYSL…EPQC, DNVA…NTNT, EGTQ…RNKD, NNTM…RGYP, EGSP…SPTS, AKSS…ELIR, and SGSS…YKSA. Residues 275–284 show a composition bias toward polar residues; the sequence is VANSGVNTNT. 3 stretches are compositionally biased toward low complexity: residues 338–351, 459–476, and 522–553; these read SVGT…GTGT, NNTM…SGSR, and SSSN…PPQR. Residues 564–576 show a composition bias toward polar residues; that stretch reads APNVTPTPGSPTS. Positions 634–655 are enriched in basic and acidic residues; the sequence is IRDKERDRDRDGYYSDRNELIR. A compositionally biased stretch (polar residues) spans 732–743; the sequence is SLRQDSSLNDSG. Residues 840 to 958 enclose the PH domain; sequence TGAVRKAGFL…SIHSACAAAF (119 aa). Residues 1088-1119 form a disordered region; it reads GRGATKRRPPMLSRSNSGSSRRSMQMNSRDEP. The span at 1100–1114 shows a compositional bias: low complexity; sequence SRSNSGSSRRSMQMN. An RBD domain is found at 1121–1188; sequence KTFKVAMPDN…PHRNDLIENY (68 aa). The PDZ domain occupies 1204–1293; it reads QVELQRTTLE…LSMMMRSSRT (90 aa). The segment at 1403–1424 is disordered; sequence AEQETRKSSPTGSVTSSVSTTA. Residues 1410 to 1424 show a composition bias toward low complexity; sequence SSPTGSVTSSVSTTA. The DH domain maps to 1436–1630; the sequence is KLRKVVMELV…EKVAEHINEM (195 aa). 3 disordered regions span residues 1803–1832, 1844–2039, and 2051–2072; these read MKNF…NSQT, HGSH…YQPV, and PRDM…DVKN. Composition is skewed to low complexity over residues 1811–1821 and 1926–1943; these read GSVSGHSSQGM and QQQQ…QQGH. The segment covering 1970–1984 has biased composition (basic and acidic residues); it reads HSSDIERIDPGTKSE. Residues 2007–2022 are compositionally biased toward low complexity; that stretch reads LTLSTTSTLSVGSTGS. Positions 2023–2032 are enriched in polar residues; it reads QARLIQSSHP.

As to expression, expressed in both larval and adult brains, mainly in a subset of neurons but not in glia. In the adult eye is expressed in the two primary pigment cells in the subapical region of the eye. Also present in photoreceptors.

Its subcellular location is the synapse. Functionally, regulates synaptic differentiation through the organization of actin cytoskeleton possibly by activating Rho-like GTPases. Is likely a factor in the cascade of Rac1 or Cdc42 in the neurons. May play a role in maintaining proper septate junction functions. Required for eye development and most likely affects corneal lens-formation. The sequence is that of Protein still life, isoform SIF type 1 (sif) from Drosophila melanogaster (Fruit fly).